A 493-amino-acid polypeptide reads, in one-letter code: Malonyl-CoA decarboxylase, mitochondrial (493 aa).

The transit peptide at 1 to 39 (MRGFGPGLTARRLLPLRLPPRPPGPRLASGQAAGALERA) directs the protein to the mitochondrion. The tract at residues 40 to 190 (MDELLRRAVP…VLKGMLSEWF (151 aa)) is alpha-helical domain. Lys-59 bears the N6-acetyllysine mark. At Lys-168 the chain carries N6-acetyllysine; alternate. Lys-168 bears the N6-succinyllysine; alternate mark. Positions 191–493 (SSGFLNLERV…VAQFQKNSKL (303 aa)) are catalytic domain. Position 211 is an N6-acetyllysine (Lys-211). Residue Lys-222 is modified to N6-succinyllysine. Malonyl-CoA contacts are provided by residues 299–305 (QGVELGT) and Ser-329. Ser-329 (proton acceptor) is an active-site residue. Lys-389 is subject to N6-acetyllysine. Residue His-423 coordinates malonyl-CoA. His-423 (proton donor) is an active-site residue. Position 472 is an N6-acetyllysine (Lys-472). The short motif at 491 to 493 (SKL) is the Microbody targeting signal element.

As to quaternary structure, homotetramer. Dimer of dimers. The two subunits within a dimer display conformational differences suggesting that at any given moment, only one of the two subunits is competent for malonyl-CoA binding and catalytic activity. Under oxidizing conditions, can form disulfide-linked homotetramers (in vitro). Associates with the peroxisomal targeting signal receptor PEX5. Post-translationally, acetylation at Lys-472 activates malonyl-CoA decarboxylase activity. Deacetylation at Lys-472 by SIRT4 represses activity, leading to promote lipogenesis. In terms of processing, interchain disulfide bonds may form in peroxisomes (Potential). Interchain disulfide bonds are not expected to form in the reducing environment of the cytoplasm and mitochondria. Expressed in fibroblasts and hepatoblastoma cells (at protein level). Expressed strongly in heart, liver, skeletal muscle, kidney and pancreas. Expressed in myotubes. Expressed weakly in brain, placenta, spleen, thymus, testis, ovary and small intestine.

Its subcellular location is the cytoplasm. The protein resides in the mitochondrion matrix. It localises to the peroxisome. It is found in the peroxisome matrix. It carries out the reaction malonyl-CoA + H(+) = acetyl-CoA + CO2. It functions in the pathway metabolic intermediate biosynthesis; acetyl-CoA biosynthesis; acetyl-CoA from malonyl-CoA: step 1/1. Its activity is regulated as follows. Malonyl-CoA decarboxylase activity does not require any cofactors or divalent metal ions. Formation of interchain disulfide bonds leads to positive cooperativity between active sites and increases the affinity for malonyl-CoA and the catalytic efficiency (in vitro). Functionally, catalyzes the conversion of malonyl-CoA to acetyl-CoA. In the fatty acid biosynthesis MCD selectively removes malonyl-CoA and thus assures that methyl-malonyl-CoA is the only chain elongating substrate for fatty acid synthase and that fatty acids with multiple methyl side chains are produced. In peroxisomes it may be involved in degrading intraperoxisomal malonyl-CoA, which is generated by the peroxisomal beta-oxidation of odd chain-length dicarboxylic fatty acids. Plays a role in the metabolic balance between glucose and lipid oxidation in muscle independent of alterations in insulin signaling. May play a role in controlling the extent of ischemic injury by promoting glucose oxidation. This chain is Malonyl-CoA decarboxylase, mitochondrial, found in Homo sapiens (Human).